Here is a 222-residue protein sequence, read N- to C-terminus: UPF0758 protein YPN_3801 (222 aa).

An MPN domain is found at 100–222 (VLLNPGITQK…CVSFAERGWL (123 aa)). Residues H171, H173, and D184 each coordinate Zn(2+). The short motif at 171–184 (HNHPSGKAEPSQAD) is the JAMM motif element.

It belongs to the UPF0758 family. YicR subfamily.

In Yersinia pestis bv. Antiqua (strain Nepal516), this protein is UPF0758 protein YPN_3801.